A 103-amino-acid chain; its full sequence is Histone H4 (103 aa).

Gly residues predominate over residues 1–14 (MSGRGKGGKGLGKG). Residues 1–20 (MSGRGKGGKGLGKGGAKRHR) form a disordered region. N-acetylserine is present on S2. An N6-acetyllysine modification is found at K17. A DNA-binding region spans residues 17–21 (KRHRK). At K21 the chain carries N6-methyllysine.

The protein belongs to the histone H4 family. In terms of assembly, the nucleosome is a histone octamer containing two molecules each of H2A, H2B, H3 and H4 assembled in one H3-H4 heterotetramer and two H2A-H2B heterodimers. The octamer wraps approximately 147 bp of DNA.

The protein localises to the nucleus. It localises to the chromosome. Its function is as follows. Core component of nucleosome. Nucleosomes wrap and compact DNA into chromatin, limiting DNA accessibility to the cellular machineries which require DNA as a template. Histones thereby play a central role in transcription regulation, DNA repair, DNA replication and chromosomal stability. DNA accessibility is regulated via a complex set of post-translational modifications of histones, also called histone code, and nucleosome remodeling. This Pyrenomonas salina protein is Histone H4.